Consider the following 379-residue polypeptide: Tubby-like F-box protein 7 (379 aa).

Positions 18–28 are enriched in polar residues; the sequence is FHQGETTTAPE. The tract at residues 18–41 is disordered; it reads FHQGETTTAPESESIPPPSNMAGS. The region spanning 42–97 is the F-box domain; the sequence is SSWSAMLPELLGEIIRRVEETEDRWPQRRDVVTCACVSKKWREITHDFARSSLNSG. 2 disordered regions span residues 193–212 and 248–278; these read SQPP…RRFA and TLRC…IMKK.

Belongs to the TUB family. In terms of tissue distribution, ubiquitous.

The polypeptide is Tubby-like F-box protein 7 (Arabidopsis thaliana (Mouse-ear cress)).